We begin with the raw amino-acid sequence, 213 residues long: Cell division protein SepF 2 (213 aa).

Positions 16–63 are disordered; the sequence is EDDGYDGRGFDPDDDFEPELDPEPERDRRRHEPPHQSHQALHPQRDES. Positions 27-39 are enriched in acidic residues; that stretch reads PDDDFEPELDPEP.

This sequence belongs to the SepF family. Homodimer. Interacts with FtsZ.

It is found in the cytoplasm. Its function is as follows. Cell division protein that is part of the divisome complex and is recruited early to the Z-ring. Probably stimulates Z-ring formation, perhaps through the cross-linking of FtsZ protofilaments. Its function overlaps with FtsA. This is Cell division protein SepF 2 from Streptomyces avermitilis (strain ATCC 31267 / DSM 46492 / JCM 5070 / NBRC 14893 / NCIMB 12804 / NRRL 8165 / MA-4680).